The primary structure comprises 948 residues: Phosphoenolpyruvate carboxylase (948 aa).

Catalysis depends on residues His-138 and Lys-610.

The protein belongs to the PEPCase type 1 family. Mg(2+) serves as cofactor.

The catalysed reaction is oxaloacetate + phosphate = phosphoenolpyruvate + hydrogencarbonate. Its function is as follows. Forms oxaloacetate, a four-carbon dicarboxylic acid source for the tricarboxylic acid cycle. The polypeptide is Phosphoenolpyruvate carboxylase (Streptococcus gordonii (strain Challis / ATCC 35105 / BCRC 15272 / CH1 / DL1 / V288)).